We begin with the raw amino-acid sequence, 304 residues long: Ornithine carbamoyltransferase (304 aa).

Residues 51-54, glutamine 78, arginine 102, and 129-132 contribute to the carbamoyl phosphate site; these read STRT and HPVQ. L-ornithine is bound by residues asparagine 157, aspartate 221, and 225-226; that span reads SM. Residues 261–262 and arginine 289 each bind carbamoyl phosphate; that span reads CL.

This sequence belongs to the aspartate/ornithine carbamoyltransferase superfamily. OTCase family.

Its subcellular location is the cytoplasm. The enzyme catalyses carbamoyl phosphate + L-ornithine = L-citrulline + phosphate + H(+). Its pathway is amino-acid degradation; L-arginine degradation via ADI pathway; carbamoyl phosphate from L-arginine: step 2/2. In terms of biological role, reversibly catalyzes the transfer of the carbamoyl group from carbamoyl phosphate (CP) to the N(epsilon) atom of ornithine (ORN) to produce L-citrulline. In Campylobacter curvus (strain 525.92), this protein is Ornithine carbamoyltransferase.